The sequence spans 545 residues: CTP synthase (545 aa).

The segment at 1–266 is amidoligase domain; that stretch reads MTTNYIFVTG…DDYICKRFSL (266 aa). A CTP-binding site is contributed by Ser14. Residue Ser14 coordinates UTP. Residues 15-20 and Asp72 contribute to the ATP site; that span reads SLGKGI. Mg(2+) is bound by residues Asp72 and Glu140. CTP is bound by residues 147-149, 187-192, and Lys223; these read DIE and KTKPTQ. UTP-binding positions include 187–192 and Lys223; that span reads KTKPTQ. 239–241 is a binding site for ATP; sequence KDV. The Glutamine amidotransferase type-1 domain occupies 291 to 542; sequence TIGMVGKYIE…VKAASEYQKR (252 aa). An L-glutamine-binding site is contributed by Gly352. The active-site Nucleophile; for glutamine hydrolysis is the Cys379. Residues 380 to 383, Glu403, and Arg470 each bind L-glutamine; that span reads LGMQ. Residues His515 and Glu517 contribute to the active site.

It belongs to the CTP synthase family. As to quaternary structure, homotetramer.

It catalyses the reaction UTP + L-glutamine + ATP + H2O = CTP + L-glutamate + ADP + phosphate + 2 H(+). The catalysed reaction is L-glutamine + H2O = L-glutamate + NH4(+). It carries out the reaction UTP + NH4(+) + ATP = CTP + ADP + phosphate + 2 H(+). It participates in pyrimidine metabolism; CTP biosynthesis via de novo pathway; CTP from UDP: step 2/2. Allosterically activated by GTP, when glutamine is the substrate; GTP has no effect on the reaction when ammonia is the substrate. The allosteric effector GTP functions by stabilizing the protein conformation that binds the tetrahedral intermediate(s) formed during glutamine hydrolysis. Inhibited by the product CTP, via allosteric rather than competitive inhibition. Its function is as follows. Catalyzes the ATP-dependent amination of UTP to CTP with either L-glutamine or ammonia as the source of nitrogen. Regulates intracellular CTP levels through interactions with the four ribonucleotide triphosphates. The sequence is that of CTP synthase from Cronobacter sakazakii (strain ATCC BAA-894) (Enterobacter sakazakii).